Consider the following 625-residue polypeptide: Thrombopoietin receptor (625 aa).

The N-terminal stretch at 1–25 (MPSWALFMVTSCLLLALPNQAQVTS) is a signal peptide. At 26 to 482 (QDVFLLALGT…RVSTGSETAW (457 aa)) the chain is on the extracellular side. The N-linked (GlcNAc...) asparagine glycan is linked to Asn117. Fibronectin type-III domains lie at 178 to 270 (NATA…PVTV) and 383 to 479 (PTPS…TGSE). Positions 465–469 (WSAWS) match the WSXWS motif motif. The helical transmembrane segment at 483 to 504 (ITLVTALLLVLSLSALLGLLLL) threads the bilayer. Topologically, residues 505-625 (KWQFPAHYRR…YLPLSYWQQP (121 aa)) are cytoplasmic. Residues 519–527 (LWPSLPDLH) carry the Box 1 motif motif. Glycyl lysine isopeptide (Lys-Gly) (interchain with G-Cter in ubiquitin) cross-links involve residues Lys544 and Lys564. Tyr616 and Tyr621 each carry phosphotyrosine.

The protein belongs to the type I cytokine receptor family. Type 1 subfamily. Homodimer. Interacts with ATXN2L. Interacts with JAK2 and TYK2; these interactions increase MPL localization to the cell membrane. Interacts with THPO. Interacts with SHIP/INPP5D. Interacts with kinases BTK and SYK. Ubiquitination at Lys-544 and Lys-564 targets MPL for degradation by both the lysosomal and proteasomal pathways. The E3 ubiquitin-protein ligase CBL significantly contributes to this ubiquitination.

It localises to the cell membrane. The protein localises to the golgi apparatus. Its subcellular location is the cell surface. In terms of biological role, receptor for thrombopoietin that regulates hematopoietic stem cell renewal, megakaryocyte differentiation, and platelet formation. Upon activation by THPO, induces rapid tyrosine phosphorylation and activation of JAK2, providing docking sites for many signaling proteins such as STAT5, SHIP/INPP5D, GRB2, SOS1 and PI3K. In turn, These signaling cascades lead to the proliferation, survival, and differentiation of megakaryocytes, ultimately leading to increased platelet production. Its function is as follows. Acts as an inhibitor of thrombopoietin signaling by promoting protein down-regulation of full-length isoform Mpl-fl. The polypeptide is Thrombopoietin receptor (Mpl) (Mus musculus (Mouse)).